The following is a 330-amino-acid chain: MKKTFILQQQEISFVKNTFTQYLIDKLGIIEVQGPILSQVGNGMQDNLSGIEKAVQVNVKCIPGATFEVVHSLAKWKRHTLARFGFKEGEGLFVHMKALRPDEDSLDPTHSVYVDQWDWEKVIPEGRRNFDFLKETVNEIYKAIRLTELAVEARFDIPSILPKQITFVHSEELVQRYPNMTGKERENAICKEHGAVFLIGIGGKLSDGKPHDGRAPDYDDWTTESENGYKGLNGDILVWNEQLGTAFELSSMGIRVDEKALRLQVELTGDQDRLEMDWHKDLLAGRLPLSIGGGIGQSRLVMFLLRKAHIGEVQSSVWPKAMLEKYKNIL.

It belongs to the class-II aminoacyl-tRNA synthetase family. AsnA subfamily.

It is found in the cytoplasm. It carries out the reaction L-aspartate + NH4(+) + ATP = L-asparagine + AMP + diphosphate + H(+). It functions in the pathway amino-acid biosynthesis; L-asparagine biosynthesis; L-asparagine from L-aspartate (ammonia route): step 1/1. The polypeptide is Aspartate--ammonia ligase (Actinobacillus pleuropneumoniae serotype 7 (strain AP76)).